An 893-amino-acid chain; its full sequence is Probable ion channel CASTOR (893 aa).

The segment at 1-94 is disordered; sequence MPLDPDSSPA…APRRRDPRYA (94 aa). Positions 65–85 are enriched in pro residues; sequence PLPPPEQQKQQQPPPTTPPPA. Residues 132–152 form a helical membrane-spanning segment; the sequence is TLRWSGMVSVAAIVLCFSSLV. Positions 156-178 form a coiled coil; it reads SSLHDQVHHLKAQLAEATTKLQS. 3 helical membrane passes run 210–230, 266–286, and 318–338; these read LLLSLSTLYAPLLILKYMDLF, LVLLVATLLLIGLGGLALYGV, and LVSVSISIGGMLVFAMMLGLV. RCK N-terminal domains are found at residues 359–500 and 619–792; these read QSHT…ETVV and PERI…DYVL. The stretch at 389–415 forms a coiled coil; it reads TIVVMAEKDKEEMEADIAKMEFDLKGT.

It belongs to the castor/pollux (TC 1.A.1.23) family. As to expression, expressed in roots, leaves, stems and panicles.

The protein localises to the nucleus membrane. In terms of biological role, required for mycorrhizal symbiosis. This is Probable ion channel CASTOR from Oryza sativa subsp. japonica (Rice).